A 108-amino-acid polypeptide reads, in one-letter code: MLTALVYVAAALAEIAGCFSFWAWLRLGKSSLWLIPGTASLLLFAWLLTLIDVSAAGRAYAAYGGVYVTVSLLWLWAMEGVWPDRWDLGGATLCLIGAAIIILAPRPA.

The next 4 helical transmembrane spans lie at 5–25 (LVYVAAALAEIAGCFSFWAWL), 31–51 (SLWLIPGTASLLLFAWLLTLI), 62–82 (AYGGVYVTVSLLWLWAMEGVW), and 88–108 (LGGATLCLIGAAIIILAPRPA).

Belongs to the UPF0060 family.

The protein localises to the cell inner membrane. This Methylocella silvestris (strain DSM 15510 / CIP 108128 / LMG 27833 / NCIMB 13906 / BL2) protein is UPF0060 membrane protein Msil_1658.